The chain runs to 1129 residues: Protein LANA1 (1129 aa).

Disordered regions lie at residues 1–988 (MAPP…PVPY) and 1110–1129 (LPLT…QEMT). Composition is skewed to basic and acidic residues over residues 28-41 (RSPE…DLHL) and 48-58 (VADSVDGRECG). Over residues 85–104 (PVAPIPSPAPATPLPPPALL) the composition is skewed to pro residues. The span at 139-156 (SPESSQRPPLSSPTGRPD) shows a compositional bias: polar residues. Positions 161–185 (MRPPPSQQTTPPHSPTTPPPEPPSK) are enriched in pro residues. Residues 186–197 (SSPDSLAPSTLR) show a composition bias toward low complexity. Positions 207-217 (PQGPSTLNPIC) are enriched in polar residues. Residues 263-275 (PISIGSSSPSEGS) are compositionally biased toward low complexity. 2 stretches are compositionally biased toward basic and acidic residues: residues 292–301 (EASKNEKECS) and 314–323 (EISKESQVDK). Residues 324–419 (DDNDNKDDEE…DKKEDEEDGG (96 aa)) are compositionally biased toward acidic residues. A compositionally biased stretch (low complexity) spans 431–471 (QQQQEPQQQEPQQQEPQQQEPQQQEPQQQEPQQQEPQQQEP). Residues 472–528 (QQREPQQREPQQREPQQREPQQREPQQREPQQREPQQREPQQREPQQREPQQREPQQ) are compositionally biased toward basic and acidic residues. Residues 529 to 596 (REPQQQEPQQ…QQQEPQQQDE (68 aa)) show a composition bias toward low complexity. Over residues 597–888 (QQQDEQQQDE…QELEEVEEQE (292 aa)) the composition is skewed to acidic residues. A compositionally biased stretch (polar residues) spans 924 to 934 (THEQIASSPPG). Residues 962–979 (PGVRMRRVPVTHPKKPHP) are compositionally biased toward basic residues. Residues 1008-1129 (FLGKDGRRDP…GPGDSPQEMT (122 aa)) are DNA-binding domain.

As to quaternary structure, homooligomer. Interacts with host BRD2. Interacts with host RELA, ELOB, ELOC and CUL5; these interactions induce the proteasomal degradation of host RELA. Interacts with host TRIM28 and NFE2L2/NRF2; these interactions are essential for the shutdown of lytic gene expression during the early stage of infection. Interacts (via N-terminus) with host histones H2A and H2B; these interactions are essential to dock LANA1 onto chromosomes. Interacts with host BUB1 and PCNA. Interacts with host NAP1L1; this interaction is required for LANA1-dependent DNA replication. Interacts with components of the host MLL1 complex KMT2A and WDR5.

It localises to the host nucleus. In terms of biological role, multifunctional protein that plays a role in the replication and long-term persistence of the viral episomal genome in dividing cells. Binds to mitotic chromosomes via its N-terminal region and to a 16-bp imperfect palindrome within the origin of replication (oriP) located in the viral terminal repeat (TR) through its C-terminal. Tethers viral episomes to chromosomes during mitosis. Plays a critical role in the shutdown of lytic gene expression during the early stage of infection by interacting with host TRIM28. Also plays a role in the repression of host NF-kappa-B activity upon TNF-alpha stimulation by promoting the proteasomal degradation of host RELA. Promotes nuclear localization and cleavage of host STAT6 leading to constitutive activation of the IL13/STAT6 signaling pathway to promote viral latency. Interacts with and modulates the histone methyltransferase MLL1 complex activity, leading to its recruitment on viral DNA terminal repeats changing the dynamic of histone H3 methylated 'Lys-4'(H3K4me) profile during the initial hours following infection. The chain is Protein LANA1 (LANA1) from Homo sapiens (Human).